Reading from the N-terminus, the 355-residue chain is Erythronate-4-phosphate dehydrogenase (355 aa).

S45 and T66 together coordinate substrate. Residue D146 coordinates NAD(+). Residue R206 is part of the active site. D229 serves as a coordination point for NAD(+). The active site involves E234. H251 serves as the catalytic Proton donor. G254 lines the NAD(+) pocket. Y255 is a substrate binding site.

Belongs to the D-isomer specific 2-hydroxyacid dehydrogenase family. PdxB subfamily. Homodimer.

Its subcellular location is the cytoplasm. It catalyses the reaction 4-phospho-D-erythronate + NAD(+) = (R)-3-hydroxy-2-oxo-4-phosphooxybutanoate + NADH + H(+). Its pathway is cofactor biosynthesis; pyridoxine 5'-phosphate biosynthesis; pyridoxine 5'-phosphate from D-erythrose 4-phosphate: step 2/5. Catalyzes the oxidation of erythronate-4-phosphate to 3-hydroxy-2-oxo-4-phosphonooxybutanoate. The polypeptide is Erythronate-4-phosphate dehydrogenase (Acinetobacter baumannii (strain SDF)).